A 152-amino-acid polypeptide reads, in one-letter code: SsrA-binding protein (152 aa).

This sequence belongs to the SmpB family.

It localises to the cytoplasm. In terms of biological role, required for rescue of stalled ribosomes mediated by trans-translation. Binds to transfer-messenger RNA (tmRNA), required for stable association of tmRNA with ribosomes. tmRNA and SmpB together mimic tRNA shape, replacing the anticodon stem-loop with SmpB. tmRNA is encoded by the ssrA gene; the 2 termini fold to resemble tRNA(Ala) and it encodes a 'tag peptide', a short internal open reading frame. During trans-translation Ala-aminoacylated tmRNA acts like a tRNA, entering the A-site of stalled ribosomes, displacing the stalled mRNA. The ribosome then switches to translate the ORF on the tmRNA; the nascent peptide is terminated with the 'tag peptide' encoded by the tmRNA and targeted for degradation. The ribosome is freed to recommence translation, which seems to be the essential function of trans-translation. The sequence is that of SsrA-binding protein from Rickettsia africae (strain ESF-5).